The primary structure comprises 443 residues: Gasdermin-A2 (443 aa).

The triggers pyroptosis stretch occupies residues 1–249 (MSMFEDVTRA…QGSTVQMISG (249 aa)). 9 to 13 (RALAR) contacts a cardiolipin. 4 beta stranded membrane-spanning segments follow: residues 78 to 95 (NFSFKNMLDVRVEGDVEV), 99 to 120 (MKVKGTVGLSQSSTLEVQMLSV), 164 to 179 (VTLKRASNAISKFSLN), and 183 to 197 (LGLQGSVNHKEAVTI). A coiled-coil region spans residues 249-312 (GEMHEDFKTL…GALDKGHEVT (64 aa)).

This sequence belongs to the gasdermin family. Homooligomer; homooligomeric ring-shaped pore complex containing 18-36 subunits when inserted in the membrane. In terms of processing, cleavage relieves autoinhibition by releasing the N-terminal moiety (Gasdermin-A2, N-terminal) that initiates pyroptosis. In contrast to Gsdma, not cleaved by bacterial effector protein SpeB. Palmitoylated. In terms of tissue distribution, expressed in the gastrointestinal tract, specifically from the middle to the upper region of the gastric mucosa in the glandular stomach.

The protein localises to the cytoplasm. Its subcellular location is the perinuclear region. It localises to the cytosol. The protein resides in the cell membrane. With respect to regulation, the full-length protein before cleavage is inactive: intramolecular interactions between N- and C-terminal domains mediate autoinhibition in the absence of activation signal. The intrinsic pyroptosis-inducing activity is carried by the released N-terminal moiety (Gasdermin-A2, N-terminal). In terms of biological role, this form constitutes the precursor of the pore-forming protein and acts as a sensor of infection: upon bacterial infection, specifically cleaved by some bacterial effector protein, releasing the N-terminal moiety (Gasdermin-A2, N-terminal) that binds to membranes and forms pores, triggering pyroptosis. Its function is as follows. Pore-forming protein that causes membrane permeabilization and pyroptosis. Released upon cleavage of Gasdermin-A2, and binds to membrane inner leaflet lipids. Homooligomerizes within the membrane and forms pores of 10-15 nanometers (nm) of inner diameter, triggering pyroptosis. Binds to membrane inner leaflet lipids, such as phosphatidylinositol (4,5)-bisphosphate. This is Gasdermin-A2 from Mus musculus (Mouse).